The following is a 1234-amino-acid chain: ATP-dependent helicase/nuclease subunit A (1234 aa).

In terms of domain architecture, UvrD-like helicase ATP-binding spans 2–475 (TQFTTSQQAA…IILAENFRST (474 aa)). 23–30 (ASAGSGKT) serves as a coordination point for ATP. The 300-residue stretch at 507–806 (YGALDYGDAH…KLMTIHKSKG (300 aa)) folds into the UvrD-like helicase C-terminal domain.

The protein belongs to the helicase family. AddA subfamily. As to quaternary structure, heterodimer of AddA and AddB/RexB. The cofactor is Mg(2+).

The enzyme catalyses Couples ATP hydrolysis with the unwinding of duplex DNA by translocating in the 3'-5' direction.. It catalyses the reaction ATP + H2O = ADP + phosphate + H(+). Its function is as follows. The heterodimer acts as both an ATP-dependent DNA helicase and an ATP-dependent, dual-direction single-stranded exonuclease. Recognizes the chi site generating a DNA molecule suitable for the initiation of homologous recombination. The AddA nuclease domain is required for chi fragment generation; this subunit has the helicase and 3' -&gt; 5' nuclease activities. The polypeptide is ATP-dependent helicase/nuclease subunit A (Lacticaseibacillus paracasei (strain ATCC 334 / BCRC 17002 / CCUG 31169 / CIP 107868 / KCTC 3260 / NRRL B-441) (Lactobacillus paracasei)).